A 101-amino-acid chain; its full sequence is Urease subunit beta (101 aa).

It belongs to the urease beta subunit family. In terms of assembly, heterotrimer of UreA (gamma), UreB (beta) and UreC (alpha) subunits. Three heterotrimers associate to form the active enzyme.

The protein localises to the cytoplasm. It carries out the reaction urea + 2 H2O + H(+) = hydrogencarbonate + 2 NH4(+). Its pathway is nitrogen metabolism; urea degradation; CO(2) and NH(3) from urea (urease route): step 1/1. This Cupriavidus necator (strain ATCC 17699 / DSM 428 / KCTC 22496 / NCIMB 10442 / H16 / Stanier 337) (Ralstonia eutropha) protein is Urease subunit beta.